A 1117-amino-acid polypeptide reads, in one-letter code: Centrosomal protein of 126 kDa (1117 aa).

Residues Met-1 to Tyr-42 are disordered. A coiled-coil region spans residues Leu-49–Ala-121. Disordered stretches follow at residues Ala-643–His-664 and Lys-730–Lys-759. The span at Lys-730–Thr-744 shows a compositional bias: basic and acidic residues. Positions Lys-745–Arg-758 are enriched in basic residues.

As to quaternary structure, interacts with DCTN1. In terms of tissue distribution, expressed in brain, lung, skeletal muscle, kidney, pancreas, testis and ovary.

The protein resides in the midbody. The protein localises to the cytoplasm. It localises to the cytoskeleton. It is found in the microtubule organizing center. Its subcellular location is the centrosome. The protein resides in the cilium basal body. Its function is as follows. Participates in cytokinesis. Necessary for microtubules and mitotic spindle organization. Involved in primary cilium formation. In Homo sapiens (Human), this protein is Centrosomal protein of 126 kDa.